A 283-amino-acid chain; its full sequence is Pantothenate synthetase (283 aa).

30-37 (MGYLHEGH) contributes to the ATP binding site. Residue His37 is the Proton donor of the active site. Gln61 provides a ligand contact to (R)-pantoate. Gln61 provides a ligand contact to beta-alanine. Residue 147-150 (GQKD) participates in ATP binding. Gln153 serves as a coordination point for (R)-pantoate. ATP is bound by residues Val176 and 184–187 (LSSR).

The protein belongs to the pantothenate synthetase family. Homodimer.

It localises to the cytoplasm. It carries out the reaction (R)-pantoate + beta-alanine + ATP = (R)-pantothenate + AMP + diphosphate + H(+). Its pathway is cofactor biosynthesis; (R)-pantothenate biosynthesis; (R)-pantothenate from (R)-pantoate and beta-alanine: step 1/1. In terms of biological role, catalyzes the condensation of pantoate with beta-alanine in an ATP-dependent reaction via a pantoyl-adenylate intermediate. The protein is Pantothenate synthetase of Moorella thermoacetica (strain ATCC 39073 / JCM 9320).